Consider the following 349-residue polypeptide: uncharacterized protein (349 aa).

The first 29 residues, 1–29, serve as a signal peptide directing secretion; the sequence is MKQKYENYFKKRLILNLLIFLLLACSSES.

This is an uncharacterized protein from Borreliella burgdorferi (strain ATCC 35210 / DSM 4680 / CIP 102532 / B31) (Borrelia burgdorferi).